A 388-amino-acid polypeptide reads, in one-letter code: Chorismate synthase (388 aa).

NADP(+) is bound by residues Arg-39 and Arg-45. FMN is bound by residues 130–132 (RSS), 251–252 (NA), Gly-296, 311–315 (KPIPT), and Arg-337.

This sequence belongs to the chorismate synthase family. Homotetramer. FMNH2 serves as cofactor.

The catalysed reaction is 5-O-(1-carboxyvinyl)-3-phosphoshikimate = chorismate + phosphate. Its pathway is metabolic intermediate biosynthesis; chorismate biosynthesis; chorismate from D-erythrose 4-phosphate and phosphoenolpyruvate: step 7/7. Catalyzes the anti-1,4-elimination of the C-3 phosphate and the C-6 proR hydrogen from 5-enolpyruvylshikimate-3-phosphate (EPSP) to yield chorismate, which is the branch point compound that serves as the starting substrate for the three terminal pathways of aromatic amino acid biosynthesis. This reaction introduces a second double bond into the aromatic ring system. The polypeptide is Chorismate synthase (Streptococcus pyogenes serotype M12 (strain MGAS2096)).